The sequence spans 173 residues: Alpha-crystallin A chain (173 aa).

Met1 bears the N-acetylmethionine mark. Positions 1-63 (MDITIQHPWF…RTVLESGISE (63 aa)) are required for complex formation with BFSP1 and BFSP2. Gln6 is subject to Deamidated glutamine; partial. A Phosphoserine modification is found at Ser45. Gln50 is subject to Deamidated glutamine; partial. Residues 52–164 (LFRTVLESGI…SDRSIPVSRE (113 aa)) enclose the sHSP domain. Lys99 bears the N6-acetyllysine mark. Zn(2+) is bound by residues His100, Glu102, and His107. Ser122 is modified (phosphoserine). Asn123 carries the post-translational modification Deamidated asparagine; partial. Positions 144–173 (PKIHSNMESSHSDRSIPVSREEKPTLAPSS) are disordered. A compositionally biased stretch (basic and acidic residues) spans 153 to 167 (SHSDRSIPVSREEKP). A Zn(2+)-binding site is contributed by His154. Ser162 is a glycosylation site (O-linked (GlcNAc) serine).

The protein belongs to the small heat shock protein (HSP20) family. Heteromer composed of three CRYAA and one CRYAB subunits. Inter-subunit bridging via zinc ions enhances stability, which is crucial as there is no protein turn over in the lens. Can also form homodimers and homotetramers (dimers of dimers) which serve as the building blocks of homooligomers. Within homooligomers, the zinc-binding motif is created from residues of 3 different molecules. His-100 and Glu-102 from one molecule are ligands of the zinc ion, and His-107 and His-154 residues from additional molecules complete the site with tetrahedral coordination geometry. Part of a complex required for lens intermediate filament formation composed of BFSP1, BFSP2 and CRYAA. Acetylation at Lys-99 may increase chaperone activity. In terms of processing, undergoes age-dependent proteolytical cleavage at the C-terminus.

The protein localises to the cytoplasm. The protein resides in the nucleus. Its function is as follows. Contributes to the transparency and refractive index of the lens. Acts as a chaperone, preventing aggregation of various proteins under a wide range of stress conditions. Required for the correct formation of lens intermediate filaments as part of a complex composed of BFSP1, BFSP2 and CRYAA. The sequence is that of Alpha-crystallin A chain (CRYAA) from Didelphis virginiana (North American opossum).